The following is a 688-amino-acid chain: Translation initiation factor IF-2 (688 aa).

2 stretches are compositionally biased toward basic and acidic residues: residues 53-62 and 86-95; these read GKEKSEKTKE and KRDDKNEKVN. The tract at residues 53–100 is disordered; sequence GKEKSEKTKEEDDEIETTAKNPIKESMNNKKSNKRDDKNEKVNTENAE. Positions 187 to 354 constitute a tr-type G domain; the sequence is KRSPIITVMG…MILLSSEILE (168 aa). The G1 stretch occupies residues 196–203; that stretch reads GHVDHGKT. 196–203 contributes to the GTP binding site; the sequence is GHVDHGKT. Residues 221–225 are G2; sequence GITQH. Positions 242–245 are G3; sequence DTPG. Residues 242–246 and 296–299 contribute to the GTP site; these read DTPGH and NKID. Residues 296–299 are G4; that stretch reads NKID. The tract at residues 332 to 334 is G5; sequence SAH.

This sequence belongs to the TRAFAC class translation factor GTPase superfamily. Classic translation factor GTPase family. IF-2 subfamily.

It is found in the cytoplasm. Its function is as follows. One of the essential components for the initiation of protein synthesis. Protects formylmethionyl-tRNA from spontaneous hydrolysis and promotes its binding to the 30S ribosomal subunits. Also involved in the hydrolysis of GTP during the formation of the 70S ribosomal complex. The chain is Translation initiation factor IF-2 from Clostridium botulinum (strain Loch Maree / Type A3).